A 277-amino-acid polypeptide reads, in one-letter code: Large ribosomal subunit protein uL2 (277 aa).

Disordered regions lie at residues 36–55 (PLPKRAGRNNQGKLTVRHHG) and 213–277 (WKGI…RKKK).

It belongs to the universal ribosomal protein uL2 family. In terms of assembly, part of the 50S ribosomal subunit. Forms a bridge to the 30S subunit in the 70S ribosome.

In terms of biological role, one of the primary rRNA binding proteins. Required for association of the 30S and 50S subunits to form the 70S ribosome, for tRNA binding and peptide bond formation. It has been suggested to have peptidyltransferase activity; this is somewhat controversial. Makes several contacts with the 16S rRNA in the 70S ribosome. This is Large ribosomal subunit protein uL2 from Staphylococcus saprophyticus subsp. saprophyticus (strain ATCC 15305 / DSM 20229 / NCIMB 8711 / NCTC 7292 / S-41).